We begin with the raw amino-acid sequence, 283 residues long: E3 ubiquitin-protein ligase MARCHF5 (283 aa).

The segment at 9 to 78 adopts an RING-CH-type zinc-finger fold; it reads VQQMLDRSCW…PQCNAEYLIV (70 aa). Positions 17, 20, 36, 38, 46, 49, 68, and 71 each coordinate Zn(2+). Transmembrane regions (helical) follow at residues 102-122, 142-162, 212-232, and 241-261; these read FAAAGIMVGSIYWTAVTYGAV, PLFLLIGLPTIPVVLILGKMI, ILCGALVFPTIATIVGKLMFS, and TILGGIAFVAIKGAFKVYFKQ.

It localises to the mitochondrion outer membrane. The protein localises to the endoplasmic reticulum membrane. The enzyme catalyses S-ubiquitinyl-[E2 ubiquitin-conjugating enzyme]-L-cysteine + [acceptor protein]-L-lysine = [E2 ubiquitin-conjugating enzyme]-L-cysteine + N(6)-ubiquitinyl-[acceptor protein]-L-lysine.. The protein operates within protein modification; protein ubiquitination. Its function is as follows. Mitochondrial E3 ubiquitin-protein ligase that plays a crucial role in the control of mitochondrial morphology by acting as a positive regulator of mitochondrial fission. May play a role in the prevention of cell senescence acting as a regulator of mitochondrial quality control. The polypeptide is E3 ubiquitin-protein ligase MARCHF5 (marchf5) (Xenopus laevis (African clawed frog)).